The chain runs to 201 residues: Probable GTP-binding protein EngB (201 aa).

Positions 21–191 (PEAQIALAGR…WQELARAAGV (171 aa)) constitute an EngB-type G domain. GTP-binding positions include 29–36 (GRSNVGKS), 56–60 (GKTRS), 75–78 (DLPG), 142–145 (TKAD), and 168–172 (VLTSS). Mg(2+) contacts are provided by Ser36 and Thr58.

It belongs to the TRAFAC class TrmE-Era-EngA-EngB-Septin-like GTPase superfamily. EngB GTPase family. Mg(2+) serves as cofactor.

Its function is as follows. Necessary for normal cell division and for the maintenance of normal septation. The protein is Probable GTP-binding protein EngB of Desulfovibrio desulfuricans (strain ATCC 27774 / DSM 6949 / MB).